The primary structure comprises 96 residues: UPF0235 protein ECA3630 (96 aa).

Belongs to the UPF0235 family.

This chain is UPF0235 protein ECA3630, found in Pectobacterium atrosepticum (strain SCRI 1043 / ATCC BAA-672) (Erwinia carotovora subsp. atroseptica).